The following is a 345-amino-acid chain: Adenosine kinase 2 (345 aa).

Asp-300 is an active-site residue.

The protein belongs to the carbohydrate kinase PfkB family. In terms of assembly, interacts with the begomovirus AL2 protein and the curtovirus L2 protein. Interacts with KIN11. Mg(2+) serves as cofactor. In terms of processing, phosphorylated by KIN11. Widely expressed.

The protein localises to the cytoplasm. It catalyses the reaction adenosine + ATP = AMP + ADP + H(+). It participates in purine metabolism; AMP biosynthesis via salvage pathway; AMP from adenosine: step 1/1. Its activity is regulated as follows. Inactivated by the begomovirus AL2 protein or the curtovirus L2 protein. In terms of biological role, ATP dependent phosphorylation of adenosine and other related nucleoside analogs to monophosphate derivatives. Essential to sustain methyl recycling. This chain is Adenosine kinase 2, found in Arabidopsis thaliana (Mouse-ear cress).